The primary structure comprises 348 residues: Phosphoribosylformylglycinamidine cyclo-ligase (348 aa).

The protein belongs to the AIR synthase family.

Its subcellular location is the cytoplasm. It catalyses the reaction 2-formamido-N(1)-(5-O-phospho-beta-D-ribosyl)acetamidine + ATP = 5-amino-1-(5-phospho-beta-D-ribosyl)imidazole + ADP + phosphate + H(+). The protein operates within purine metabolism; IMP biosynthesis via de novo pathway; 5-amino-1-(5-phospho-D-ribosyl)imidazole from N(2)-formyl-N(1)-(5-phospho-D-ribosyl)glycinamide: step 2/2. The protein is Phosphoribosylformylglycinamidine cyclo-ligase of Ruegeria sp. (strain TM1040) (Silicibacter sp.).